The following is an 896-amino-acid chain: Putative mannosylglycerate hydrolase (896 aa).

Positions 12, 14, 125, and 348 each coordinate a divalent metal cation. Aspartate 125 acts as the Nucleophile in catalysis.

Belongs to the glycosyl hydrolase 38 family. The cofactor is a divalent metal cation.

The catalysed reaction is (2R)-2-O-(6-phospho-alpha-D-mannosyl)-glycerate + H2O = alpha-D-mannose 6-phosphate + (R)-glycerate. In terms of biological role, may hydrolyze 6-phospho-mannosyl-D-glycerate to mannose-6-phosphate and glycerate. The chain is Putative mannosylglycerate hydrolase (mngB) from Halalkalibacterium halodurans (strain ATCC BAA-125 / DSM 18197 / FERM 7344 / JCM 9153 / C-125) (Bacillus halodurans).